The chain runs to 183 residues: Ras-related protein Rap-2a (183 aa).

10–17 contacts GTP; the sequence is GSGGVGKS. An Effector region motif is present at residues 32–40; sequence YDPTIEDFY. Residues 57–61 and 116–119 each bind GTP; these read DTAGT and NKVD. 2 S-palmitoyl cysteine lipidation sites follow: Cys-176 and Cys-177. A Cysteine methyl ester modification is found at Cys-180. Cys-180 carries S-farnesyl cysteine lipidation. A propeptide spans 181–183 (removed in mature form); sequence VIL.

It belongs to the small GTPase superfamily. Ras family. Interacts (GTP-bound form) with RUNDC3A. Interacts with PLCE1. Interacts with ARHGAP29, SGSM1, SGSM2 and SGSM3. Interacts (GTP-bound form preferentially) with TNIK (via the CNH domain); the interaction is direct and recruits RAP2A to the E3 ubiquitin ligase NEDD4. Interacts with MINK1. Interacts (GTP-bound form preferentially) with MAP4K4. Interacts with cytoskeletal actin. Interacts with RGS14; the interaction is GTP-dependent. Ubiquitinated; undergoes 'Lys-63' monoubiquitination and diubiquitination by NEDD4. Multiple lysine residues are probably modified. Ubiquitination requires TNIK, prevents interaction with effectors and inactivates RAP2A. Ubiquitination by the ECS(RAB40B) complex leads to RAP2A localization to lamellipodia plasma membrane, activation, and regulation of sorting at early endosomes for recycling to the lamellipodia plasma membrane. Post-translationally, palmitoylated. Palmitoylation is required for association with recycling endosome membranes and activation of TNIK.

Its subcellular location is the midbody. The protein localises to the cell projection. It is found in the lamellipodium membrane. The protein resides in the golgi apparatus. It localises to the recycling endosome membrane. Its subcellular location is the lysosome. It carries out the reaction GTP + H2O = GDP + phosphate + H(+). Its activity is regulated as follows. Activated by the guanine nucleotide-exchange factors RAPGEF3 and RAPGEF4 in a cAMP-dependent manner. Nucleotide exchange is also specifically stimulated by RAPGEF5, RASGEF1A and RASGEF1B. Small GTP-binding protein which cycles between a GDP-bound inactive and a GTP-bound active form. In its active form interacts with and regulates several effectors including MAP4K4, MINK1 and TNIK. Part of a signaling complex composed of NEDD4, RAP2A and TNIK which regulates neuronal dendrite extension and arborization during development. More generally, it is part of several signaling cascades and may regulate cytoskeletal rearrangements, cell migration, cell adhesion and cell spreading. This is Ras-related protein Rap-2a (RAP2A) from Sus scrofa (Pig).